Consider the following 208-residue polypeptide: V-type proton ATPase subunit E (208 aa).

Belongs to the V-ATPase E subunit family.

Its function is as follows. Produces ATP from ADP in the presence of a proton gradient across the membrane. The polypeptide is V-type proton ATPase subunit E (Chlamydia trachomatis serovar L2 (strain ATCC VR-902B / DSM 19102 / 434/Bu)).